A 666-amino-acid polypeptide reads, in one-letter code: Asperfuranone cluster transcription factor afoA (666 aa).

A DNA-binding region (zn(2)-C6 fungal-type) is located at residues 16 to 43 (CEECRRRKARCDRVRPKCGFCTENELQC). 2 disordered regions span residues 184-206 (LSFD…STTR) and 347-373 (AGSD…GENA). A compositionally biased stretch (low complexity) spans 353–369 (LSPPSSSPPSSLTLSPS).

It localises to the nucleus. In terms of biological role, transcription factor that regulates the expression of the gene cluster that mediates the biosynthesis of asperfuranone, a probable antitumor agent. The polypeptide is Asperfuranone cluster transcription factor afoA (Emericella nidulans (strain FGSC A4 / ATCC 38163 / CBS 112.46 / NRRL 194 / M139) (Aspergillus nidulans)).